The primary structure comprises 358 residues: Uroporphyrinogen decarboxylase (358 aa).

Substrate contacts are provided by residues 36-40 (RQAGR), D85, Y160, S215, and H338.

This sequence belongs to the uroporphyrinogen decarboxylase family. As to quaternary structure, homodimer.

The protein localises to the cytoplasm. The enzyme catalyses uroporphyrinogen III + 4 H(+) = coproporphyrinogen III + 4 CO2. The protein operates within porphyrin-containing compound metabolism; protoporphyrin-IX biosynthesis; coproporphyrinogen-III from 5-aminolevulinate: step 4/4. Catalyzes the decarboxylation of four acetate groups of uroporphyrinogen-III to yield coproporphyrinogen-III. This is Uroporphyrinogen decarboxylase from Corynebacterium glutamicum (strain ATCC 13032 / DSM 20300 / JCM 1318 / BCRC 11384 / CCUG 27702 / LMG 3730 / NBRC 12168 / NCIMB 10025 / NRRL B-2784 / 534).